The primary structure comprises 567 residues: Wee1-like protein kinase 2 (567 aa).

Composition is skewed to basic and acidic residues over residues 1-12, 25-35, 42-51, and 64-77; these read MDDKDIDKELRQ, EGQKKVEESRE, EKGEVQDSEA, and HELDTSSEKDKESP. The segment at 1–117 is disordered; that stretch reads MDDKDIDKEL…DSPSTPKTML (117 aa). Phosphoserine is present on serine 76. The Nuclear localization signal signature appears at 173–175; the sequence is KRK. The Protein kinase domain occupies 212–486; it reads FLEVEKIGVG…AAALARNTVL (275 aa). ATP is bound by residues 218–226 and lysine 241; that span reads IGVGEFGTV. Residues 315-329 carry the Nuclear export signal motif; that stretch reads KLKDILLQISLGLNY. The active-site Proton acceptor is the aspartate 339. Mg(2+)-binding residues include asparagine 344 and aspartate 380. A coiled-coil region spans residues 494 to 519; the sequence is EELQQQLNLEKFKTATLERELREAQQ. The segment at 514-567 is disordered; it reads LREAQQAQSPQGYTHHGDTGVSGTHTGSRSTKRLVGGKSARSSSFTSGEREPLH.

Belongs to the protein kinase superfamily. Ser/Thr protein kinase family. WEE1 subfamily. Phosphorylated on serine residues. Phosphorylation leads to increase its activity. In terms of tissue distribution, expressed in oocytes (at protein level). May also be expressed in testis.

It localises to the nucleus. It carries out the reaction L-tyrosyl-[protein] + ATP = O-phospho-L-tyrosyl-[protein] + ADP + H(+). Its function is as follows. Oocyte-specific protein tyrosine kinase that phosphorylates and inhibits CDK1/CDC2 and acts as a key regulator of meiosis during both prophase I and metaphase II. Required to maintain meiotic arrest in oocytes during the germinal vesicle (GV) stage, a long period of quiescence at dictyate prophase I, by phosphorylating CDK1 at 'Tyr-15', leading to inhibit CDK1 activity and prevent meiotic reentry. Also required for metaphase II exit during egg activation by phosphorylating CDK1 at 'Tyr-15', to ensure exit from meiosis in oocytes and promote pronuclear formation. This is Wee1-like protein kinase 2 (WEE2) from Homo sapiens (Human).